The chain runs to 87 residues: Cell division topological specificity factor (87 aa).

The protein belongs to the MinE family.

Prevents the cell division inhibition by proteins MinC and MinD at internal division sites while permitting inhibition at polar sites. This ensures cell division at the proper site by restricting the formation of a division septum at the midpoint of the long axis of the cell. The sequence is that of Cell division topological specificity factor from Chelativorans sp. (strain BNC1).